The primary structure comprises 268 residues: Ribosomal RNA small subunit methyltransferase A (268 aa).

Positions 16, 18, 43, 64, 89, and 110 each coordinate S-adenosyl-L-methionine.

The protein belongs to the class I-like SAM-binding methyltransferase superfamily. rRNA adenine N(6)-methyltransferase family. RsmA subfamily.

The protein localises to the cytoplasm. It catalyses the reaction adenosine(1518)/adenosine(1519) in 16S rRNA + 4 S-adenosyl-L-methionine = N(6)-dimethyladenosine(1518)/N(6)-dimethyladenosine(1519) in 16S rRNA + 4 S-adenosyl-L-homocysteine + 4 H(+). Its function is as follows. Specifically dimethylates two adjacent adenosines (A1518 and A1519) in the loop of a conserved hairpin near the 3'-end of 16S rRNA in the 30S particle. May play a critical role in biogenesis of 30S subunits. This Pseudomonas syringae pv. syringae (strain B728a) protein is Ribosomal RNA small subunit methyltransferase A.